The sequence spans 600 residues: MTTQSIILLAVFLLVLLVLAYPLGTYLAKVGGTAPIRGLGWLARFEQFLYRMAGSNAQTEMSWKGYAIALLVFNVLGTFFVYAVQRMQAWLPLNPQAFGNVSPDSSFNTAVSFVANTNWQGYGGESTMSYLTQMLALSGQNFFSAATGIAVIYALIRGFSHRSVKSIGNFWVDLTRSTLYVLLPLSVIVAVVLMSQGVIQNFSSYKDVALIDPITYQQPKVGTDGQPVVDDKGAPVLETLTAKTQTIAMGPVASQEAIKMLGTNGGGFFNANSAHPYENPTAFSNLVEMLAIFLIPAALCFTFGRMVGDMRQGWAILGAMTLLFVVLTAVVMGAEQQAHPGLAALGVDQGASLMQAGGNMEGKETRFGISASTLFAAVTTAASCGAVNAMHDSFTPLGGMIPTVLMQLGEVVFGGVGTGLYGMLVFAILAVFIAGLMIGRTPEYLGKKIQAYEMKMASLVILVTPCLVLLGTAIAVVLDPGKAGILNPGAHGFSEVLYAFTSAANNNGSAFAGLSANTPFYNVMLAIAMWFGRFAVIVPVLAIAGSLAAKKRLEVNAGTMPTHGPLFIALLVGTVLLVGVLNYVPALALGPVVEHLQLFK.

A run of 11 helical transmembrane segments spans residues 6–26 (IILLAVFLLVLLVLAYPLGTY), 65–85 (GYAIALLVFNVLGTFFVYAVQ), 136–156 (ALSGQNFFSAATGIAVIYALI), 179–199 (LYVLLPLSVIVAVVLMSQGVI), 283–303 (FSNLVEMLAIFLIPAALCFTF), 314–334 (WAILGAMTLLFVVLTAVVMGA), 367–387 (FGISASTLFAAVTTAASCGAV), 419–439 (GLYGMLVFAILAVFIAGLMIG), 458–478 (SLVILVTPCLVLLGTAIAVVL), 523–543 (VMLAIAMWFGRFAVIVPVLAI), and 566–586 (LFIALLVGTVLLVGVLNYVPA).

It belongs to the KdpA family. The system is composed of three essential subunits: KdpA, KdpB and KdpC.

It localises to the cell inner membrane. Part of the high-affinity ATP-driven potassium transport (or Kdp) system, which catalyzes the hydrolysis of ATP coupled with the electrogenic transport of potassium into the cytoplasm. This subunit binds the periplasmic potassium ions and delivers the ions to the membrane domain of KdpB through an intramembrane tunnel. This Janthinobacterium sp. (strain Marseille) (Minibacterium massiliensis) protein is Potassium-transporting ATPase potassium-binding subunit.